The chain runs to 88 residues: Small ribosomal subunit protein bS20 (88 aa).

Positions 1 to 17 (MANIKSNEKRLRQDIKR) are enriched in basic and acidic residues. The disordered stretch occupies residues 1-25 (MANIKSNEKRLRQDIKRNLNNKGQK).

This sequence belongs to the bacterial ribosomal protein bS20 family.

In terms of biological role, binds directly to 16S ribosomal RNA. This is Small ribosomal subunit protein bS20 from Mycoplasma genitalium (strain ATCC 33530 / DSM 19775 / NCTC 10195 / G37) (Mycoplasmoides genitalium).